The sequence spans 305 residues: Olfactory receptor 4B13 (305 aa).

Topologically, residues 1–25 are extracellular; it reads MANKNNVTELIFTGLFQDPEVQKVC. Asparagine 6 is a glycosylation site (N-linked (GlcNAc...) asparagine). The chain crosses the membrane as a helical span at residues 26 to 46; sequence FVLFLPVYLATLLGNSLILVA. Over 47–55 the chain is Cytoplasmic; it reads VSISKTLHS. Residues 56-76 form a helical membrane-spanning segment; sequence PMYFFLSSLSLVEICYSSTIV. At 77-95 the chain is on the extracellular side; that stretch reads PKFITDLLAKVKTISLKGC. A disulfide bond links cysteine 95 and cysteine 187. A helical membrane pass occupies residues 96–116; it reads LTQIFFSHFFGVVEVILLVVM. Residues 117-141 lie on the Cytoplasmic side of the membrane; the sequence is AYDRYVAICKPLHYMNIMSRQVCHM. Residues 142–162 form a helical membrane-spanning segment; the sequence is LVAGSWLGGFIHSIIQIIITI. Residues 163 to 202 are Extracellular-facing; that stretch reads PLPFCGPNVIDHYFCDLQQLFKLACTDTFMEGFIVMANSG. A helical membrane pass occupies residues 203-223; that stretch reads LISIVSLFILVSSYAVILISL. The Cytoplasmic segment spans residues 224–236; it reads RKRSAEGRRKALS. A helical membrane pass occupies residues 237-257; it reads TCASHITVVILFFVPGAFIYM. The Extracellular portion of the chain corresponds to 258 to 266; it reads RPSSTFTED. The chain crosses the membrane as a helical span at residues 267–287; that stretch reads KLVSVFYTVITPMLNPIVYTL. The Cytoplasmic portion of the chain corresponds to 288–305; that stretch reads RNTEMKNAIRMSWKQKDS.

This sequence belongs to the G-protein coupled receptor 1 family.

It localises to the cell membrane. In terms of biological role, odorant receptor. This chain is Olfactory receptor 4B13, found in Mus musculus (Mouse).